A 188-amino-acid chain; its full sequence is dCTP deaminase (188 aa).

DCTP contacts are provided by residues 111-116 (KSTYAR), 135-137 (TLE), Q156, Y170, K179, and Q180. Catalysis depends on E137, which acts as the Proton donor/acceptor.

It belongs to the dCTP deaminase family. As to quaternary structure, homotrimer.

The catalysed reaction is dCTP + H2O + H(+) = dUTP + NH4(+). Its pathway is pyrimidine metabolism; dUMP biosynthesis; dUMP from dCTP (dUTP route): step 1/2. Functionally, catalyzes the deamination of dCTP to dUTP. The chain is dCTP deaminase from Rickettsia bellii (strain OSU 85-389).